The primary structure comprises 123 residues: NADH dehydrogenase [ubiquinone] 1 beta subcomplex subunit 7 (123 aa).

Residues 1 to 32 form a disordered region; the sequence is MGTKLSVSLEGASTPETAPRVDRPPTFDPQYG. In terms of domain architecture, CHCH spans 59–102; it reads RDYCAHHLISLMKCQTQNAPFAGHACDGERGAWDKCEYDDHIMR. 2 short sequence motifs (cx9C motif) span residues 62-72 and 84-94; these read CAHHLISLMKC and CDGERGAWDKC. 2 cysteine pairs are disulfide-bonded: cysteine 62/cysteine 94 and cysteine 72/cysteine 84.

The protein belongs to the complex I NDUFB7 subunit family. As to quaternary structure, complex I is composed of 45 different subunits.

It localises to the mitochondrion. The protein localises to the mitochondrion inner membrane. The protein resides in the mitochondrion intermembrane space. Functionally, accessory subunit of the mitochondrial membrane respiratory chain NADH dehydrogenase (Complex I), that is believed not to be involved in catalysis. Complex I functions in the transfer of electrons from NADH to the respiratory chain. The immediate electron acceptor for the enzyme is believed to be ubiquinone. The protein is NADH dehydrogenase [ubiquinone] 1 beta subcomplex subunit 7 of Caenorhabditis elegans.